A 788-amino-acid polypeptide reads, in one-letter code: Protein translocase subunit SecA 2 (788 aa).

ATP contacts are provided by residues Gln-86, 104–108 (GEGKT), and Asp-493.

It belongs to the SecA family. In terms of assembly, monomer and homodimer. Part of the essential Sec protein translocation apparatus which comprises SecA, SecYEG and auxiliary proteins SecDF. Other proteins may also be involved.

The protein resides in the cell membrane. It localises to the cytoplasm. The enzyme catalyses ATP + H2O + cellular proteinSide 1 = ADP + phosphate + cellular proteinSide 2.. Functionally, part of the Sec protein translocase complex. Interacts with the SecYEG preprotein conducting channel. Has a central role in coupling the hydrolysis of ATP to the transfer of proteins into and across the cell membrane, serving as an ATP-driven molecular motor driving the stepwise translocation of polypeptide chains across the membrane. The protein is Protein translocase subunit SecA 2 of Bacillus thuringiensis (strain Al Hakam).